Reading from the N-terminus, the 371-residue chain is Histidinol-phosphate aminotransferase 2 (371 aa).

N6-(pyridoxal phosphate)lysine is present on K232.

Belongs to the class-II pyridoxal-phosphate-dependent aminotransferase family. Histidinol-phosphate aminotransferase subfamily. As to quaternary structure, homodimer. It depends on pyridoxal 5'-phosphate as a cofactor.

The enzyme catalyses L-histidinol phosphate + 2-oxoglutarate = 3-(imidazol-4-yl)-2-oxopropyl phosphate + L-glutamate. Its pathway is amino-acid biosynthesis; L-histidine biosynthesis; L-histidine from 5-phospho-alpha-D-ribose 1-diphosphate: step 7/9. This is Histidinol-phosphate aminotransferase 2 from Methylococcus capsulatus (strain ATCC 33009 / NCIMB 11132 / Bath).